Here is a 333-residue protein sequence, read N- to C-terminus: Protein farnesyltransferase/geranylgeranyltransferase type-1 subunit alpha (333 aa).

5 PFTA repeats span residues 61-95, 96-130, 132-166, 167-200, and 207-241; these read LSSR…SLKV, DLHV…KLGP, ARNS…NLGG, WEDE…RSPV, and MRES…DEST.

It belongs to the protein prenyltransferase subunit alpha family. As to quaternary structure, heterodimer of FTA and FTB (farnesyltransferase). Heterodimer of an alpha and a beta subunit. Requires Mg(2+) as cofactor.

It carries out the reaction L-cysteinyl-[protein] + (2E,6E)-farnesyl diphosphate = S-(2E,6E)-farnesyl-L-cysteinyl-[protein] + diphosphate. The enzyme catalyses geranylgeranyl diphosphate + L-cysteinyl-[protein] = S-geranylgeranyl-L-cysteinyl-[protein] + diphosphate. Its function is as follows. Essential subunit of both the farnesyltransferase and the geranylgeranyltransferase complex. Contributes to the transfer of a farnesyl or geranylgeranyl moiety from farnesyl or geranylgeranyl diphosphate to a cysteine at the fourth position from the C-terminus of several proteins having the C-terminal sequence Cys-aliphatic-aliphatic-X. In Pisum sativum (Garden pea), this protein is Protein farnesyltransferase/geranylgeranyltransferase type-1 subunit alpha (FTA).